Consider the following 419-residue polypeptide: UDP-N-acetylglucosamine 1-carboxyvinyltransferase (419 aa).

22–23 (KN) lines the phosphoenolpyruvate pocket. Arginine 91 provides a ligand contact to UDP-N-acetyl-alpha-D-glucosamine. Cysteine 115 serves as the catalytic Proton donor. Cysteine 115 bears the 2-(S-cysteinyl)pyruvic acid O-phosphothioketal mark. Residues 120-124 (RPVDL), 160-163 (KVSV), aspartate 305, and valine 327 contribute to the UDP-N-acetyl-alpha-D-glucosamine site.

Belongs to the EPSP synthase family. MurA subfamily.

Its subcellular location is the cytoplasm. It carries out the reaction phosphoenolpyruvate + UDP-N-acetyl-alpha-D-glucosamine = UDP-N-acetyl-3-O-(1-carboxyvinyl)-alpha-D-glucosamine + phosphate. It functions in the pathway cell wall biogenesis; peptidoglycan biosynthesis. In terms of biological role, cell wall formation. Adds enolpyruvyl to UDP-N-acetylglucosamine. In Shigella dysenteriae serotype 1 (strain Sd197), this protein is UDP-N-acetylglucosamine 1-carboxyvinyltransferase.